A 151-amino-acid polypeptide reads, in one-letter code: Large ribosomal subunit protein bL9 (151 aa).

This sequence belongs to the bacterial ribosomal protein bL9 family.

Functionally, binds to the 23S rRNA. The polypeptide is Large ribosomal subunit protein bL9 (Pelobacter propionicus (strain DSM 2379 / NBRC 103807 / OttBd1)).